We begin with the raw amino-acid sequence, 149 residues long: Pleckstrin homology domain-containing family J member 1 (149 aa).

Residues Arg15–Tyr108 form the PH domain.

This Xenopus laevis (African clawed frog) protein is Pleckstrin homology domain-containing family J member 1 (plekhj1).